The chain runs to 310 residues: MIDQLYRKAVLTVAERPQVEQLARQKMWNLAERFVAGESIESAIQAVQALERDGIAGNLDLLGEFIDSPAKCTEFADDVIKLIEAAHAAGIKPYVSIKLSSVGQGKDENGEDLGLTNARRIIAKAKEYGGFICLDMEDHTRVDVTLEQFRTLVGEFGAEHVGTVLQSYLYRSLGDRASLDDLRPNIRMVKGAYLEPATVAYPDKADVDQNYRRLVFQHLKAGNYTNVATHDERIIDDVKRFVLAHGIGKDAFEFQMLYGIRRDLQKQLAAEGYRVRVYLPYGRDWYAYFSRRIAETPRNAAFVVQGMLKG.

Residue lysine 98 participates in substrate binding. Aspartate 135 is an active-site residue. Residues methionine 136, glutamine 166, 187–192 (RMVKGA), 229–230 (TH), and 292–295 (RIAE) each bind FAD. Arginine 187 is an active-site residue. 291 to 292 (RR) contributes to the substrate binding site.

The protein belongs to the proline dehydrogenase family. FAD is required as a cofactor.

The enzyme catalyses L-proline + a quinone = (S)-1-pyrroline-5-carboxylate + a quinol + H(+). It participates in amino-acid degradation; L-proline degradation into L-glutamate; L-glutamate from L-proline: step 1/2. Functionally, converts proline to delta-1-pyrroline-5-carboxylate. The sequence is that of Proline dehydrogenase from Deinococcus radiodurans (strain ATCC 13939 / DSM 20539 / JCM 16871 / CCUG 27074 / LMG 4051 / NBRC 15346 / NCIMB 9279 / VKM B-1422 / R1).